A 312-amino-acid chain; its full sequence is tRNA pseudouridine synthase B (312 aa).

Residue D37 is the Nucleophile of the active site.

Belongs to the pseudouridine synthase TruB family. Type 1 subfamily.

The catalysed reaction is uridine(55) in tRNA = pseudouridine(55) in tRNA. Responsible for synthesis of pseudouridine from uracil-55 in the psi GC loop of transfer RNAs. The chain is tRNA pseudouridine synthase B from Thermus thermophilus (strain ATCC BAA-163 / DSM 7039 / HB27).